The following is a 399-amino-acid chain: Argininosuccinate synthase (399 aa).

Residue 9–17 (AYSGGLDTS) participates in ATP binding. Tyrosine 88 is an L-citrulline binding site. An ATP-binding site is contributed by glycine 118. Threonine 120, asparagine 124, and aspartate 125 together coordinate L-aspartate. Asparagine 124 is a binding site for L-citrulline. The L-citrulline site is built by arginine 128, serine 176, glutamate 261, and tyrosine 273.

The protein belongs to the argininosuccinate synthase family. Type 1 subfamily. As to quaternary structure, homotetramer.

The protein resides in the cytoplasm. It catalyses the reaction L-citrulline + L-aspartate + ATP = 2-(N(omega)-L-arginino)succinate + AMP + diphosphate + H(+). It functions in the pathway amino-acid biosynthesis; L-arginine biosynthesis; L-arginine from L-ornithine and carbamoyl phosphate: step 2/3. This chain is Argininosuccinate synthase, found in Mycobacterium leprae (strain TN).